A 302-amino-acid chain; its full sequence is Sulfotransferase 1C4 (302 aa).

3'-phosphoadenylyl sulfate is bound at residue K55–W60. Substrate is bound at residue K113–H115. The active-site Proton acceptor is H115. 3'-phosphoadenylyl sulfate-binding positions include R137, S145, Y200, T234–M239, and F262–G266.

Belongs to the sulfotransferase 1 family. As to expression, expressed in liver, kidney and jejunum.

It localises to the cytoplasm. The protein localises to the cytosol. The enzyme catalyses a phenol + 3'-phosphoadenylyl sulfate = an aryl sulfate + adenosine 3',5'-bisphosphate + H(+). The catalysed reaction is 17beta-estradiol + 3'-phosphoadenylyl sulfate = 17beta-estradiol 3-sulfate + adenosine 3',5'-bisphosphate + H(+). It catalyses the reaction bisphenol A + 3'-phosphoadenylyl sulfate = bisphenyl A sulfate + adenosine 3',5'-bisphosphate + H(+). Functionally, sulfotransferase that utilizes 3'-phospho-5'-adenylyl sulfate (PAPS) as sulfonate donor to catalyze the sulfate conjugation of phenolic compounds and estrogen (E2). Can also sulfonate estrogenic compounds, however, the dietary flavonoids (phytoestrogen) and environmental estrogens, like bisphenol A are better substrates than 17beta-estradiol (E2). This chain is Sulfotransferase 1C4 (SULT1C4), found in Macaca fascicularis (Crab-eating macaque).